The following is a 61-amino-acid chain: Small ribosomal subunit protein uS14B (61 aa).

Cys24, Cys27, Cys40, and Cys43 together coordinate Zn(2+).

It belongs to the universal ribosomal protein uS14 family. Zinc-binding uS14 subfamily. Part of the 30S ribosomal subunit. Contacts proteins S3 and S10. It depends on Zn(2+) as a cofactor.

Binds 16S rRNA, required for the assembly of 30S particles and may also be responsible for determining the conformation of the 16S rRNA at the A site. This Kineococcus radiotolerans (strain ATCC BAA-149 / DSM 14245 / SRS30216) protein is Small ribosomal subunit protein uS14B.